Here is a 218-residue protein sequence, read N- to C-terminus: Adenylate kinase (218 aa).

10–15 (GAGKGT) contributes to the ATP binding site. Positions 30 to 59 (STGDMLRAAVKAGTPLGQQAKAVMDAGKLV) are NMP. AMP is bound by residues Thr-31, Arg-36, 57–59 (KLV), 85–88 (GFPR), and Gln-92. Positions 122–159 (GRRSHPASGRTYHVKFNPPKVEGKDDVTGEDLIQREDD) are LID. ATP-binding positions include Arg-123 and 132–133 (TY). A disordered region spans residues 127–147 (PASGRTYHVKFNPPKVEGKDD). Arg-156 and Arg-167 together coordinate AMP. Gly-203 provides a ligand contact to ATP.

This sequence belongs to the adenylate kinase family. Monomer.

The protein localises to the cytoplasm. The enzyme catalyses AMP + ATP = 2 ADP. Its pathway is purine metabolism; AMP biosynthesis via salvage pathway; AMP from ADP: step 1/1. In terms of biological role, catalyzes the reversible transfer of the terminal phosphate group between ATP and AMP. Plays an important role in cellular energy homeostasis and in adenine nucleotide metabolism. This is Adenylate kinase from Paracidovorax citrulli (strain AAC00-1) (Acidovorax citrulli).